A 249-amino-acid polypeptide reads, in one-letter code: DNA polymerase sliding clamp (249 aa).

This sequence belongs to the PCNA family. As to quaternary structure, the subunits circularize to form a toroid; DNA passes through its center. Replication factor C (RFC) is required to load the toroid on the DNA. Homotrimer. Interacts with NucS.

Its function is as follows. Sliding clamp subunit that acts as a moving platform for DNA processing. Responsible for tethering the catalytic subunit of DNA polymerase and other proteins to DNA during high-speed replication. Regulates activity of NucS endonuclease and prevents non-specific cleavage. This is DNA polymerase sliding clamp from Pyrococcus abyssi (strain GE5 / Orsay).